Here is a 242-residue protein sequence, read N- to C-terminus: Uridylate kinase (242 aa).

Residue 12–15 (KLSG) participates in ATP binding. The tract at residues 20–25 (GDEGFG) is involved in allosteric activation by GTP. Gly54 is a UMP binding site. The ATP site is built by Gly55 and Arg59. UMP contacts are provided by residues Asp74 and 135–142 (TGSPFFTT). Residues Thr162, Tyr168, and Asp171 each contribute to the ATP site.

The protein belongs to the UMP kinase family. In terms of assembly, homohexamer.

Its subcellular location is the cytoplasm. The catalysed reaction is UMP + ATP = UDP + ADP. It participates in pyrimidine metabolism; CTP biosynthesis via de novo pathway; UDP from UMP (UMPK route): step 1/1. Its activity is regulated as follows. Allosterically activated by GTP. Inhibited by UTP. Its function is as follows. Catalyzes the reversible phosphorylation of UMP to UDP. The sequence is that of Uridylate kinase from Pasteurella multocida (strain Pm70).